The following is a 426-amino-acid chain: Glutamate-1-semialdehyde 2,1-aminomutase (426 aa).

Lys-268 carries the post-translational modification N6-(pyridoxal phosphate)lysine.

This sequence belongs to the class-III pyridoxal-phosphate-dependent aminotransferase family. HemL subfamily. The cofactor is pyridoxal 5'-phosphate.

It localises to the cytoplasm. The enzyme catalyses (S)-4-amino-5-oxopentanoate = 5-aminolevulinate. It functions in the pathway porphyrin-containing compound metabolism; protoporphyrin-IX biosynthesis; 5-aminolevulinate from L-glutamyl-tRNA(Glu): step 2/2. The sequence is that of Glutamate-1-semialdehyde 2,1-aminomutase from Saccharolobus islandicus (strain Y.N.15.51 / Yellowstone #2) (Sulfolobus islandicus).